Reading from the N-terminus, the 280-residue chain is Energy-coupling factor transporter ATP-binding protein EcfA2 (280 aa).

One can recognise an ABC transporter domain in the interval 3–245 (IEFKNVSYTY…VELLESKQLG (243 aa)). 40–47 (GHTGSGKS) contacts ATP.

This sequence belongs to the ABC transporter superfamily. Energy-coupling factor EcfA family. Forms a stable energy-coupling factor (ECF) transporter complex composed of 2 membrane-embedded substrate-binding proteins (S component), 2 ATP-binding proteins (A component) and 2 transmembrane proteins (T component).

It is found in the cell membrane. In terms of biological role, ATP-binding (A) component of a common energy-coupling factor (ECF) ABC-transporter complex. Unlike classic ABC transporters this ECF transporter provides the energy necessary to transport a number of different substrates. The chain is Energy-coupling factor transporter ATP-binding protein EcfA2 from Streptococcus agalactiae serotype Ia (strain ATCC 27591 / A909 / CDC SS700).